Consider the following 85-residue polypeptide: Coiled-coil-helix-coiled-coil-helix domain-containing protein 7 (85 aa).

The 43-residue stretch at 13 to 55 (INPCLSESDASTRCLDENNYDKERCSTYFLKYKNCRKFWHSIM) folds into the CHCH domain. Short sequence motifs (cx9C motif) lie at residues 16–26 (CLSESDASTRC) and 37–47 (CSTYFLKYKNC). Cystine bridges form between C16–C47 and C26–C37.

The protein belongs to the CHCHD7 family. Monomer.

The protein resides in the mitochondrion intermembrane space. The sequence is that of Coiled-coil-helix-coiled-coil-helix domain-containing protein 7 (CHCHD7) from Macaca fascicularis (Crab-eating macaque).